The sequence spans 722 residues: Glycine--tRNA ligase beta subunit (722 aa).

It belongs to the class-II aminoacyl-tRNA synthetase family. Tetramer of two alpha and two beta subunits.

It localises to the cytoplasm. It catalyses the reaction tRNA(Gly) + glycine + ATP = glycyl-tRNA(Gly) + AMP + diphosphate. The sequence is that of Glycine--tRNA ligase beta subunit from Haemophilus influenzae (strain 86-028NP).